A 212-amino-acid chain; its full sequence is Ras-related protein Rab-21 (212 aa).

GTP-binding positions include 14–21, 62–66, and 120–123; these read GEGCVGKT, DTAGQ, and NKCD. Positions 181–212 are disordered; sequence TNTTGQTTNRSERIPIVPDSDSGNKQPGCCSN. Residues 201-212 show a composition bias toward polar residues; the sequence is DSGNKQPGCCSN. S-geranylgeranyl cysteine attachment occurs at residues cysteine 209 and cysteine 210.

It belongs to the small GTPase superfamily. Rab family. Interacts with LIM domain proteins limF and ChLim.

It is found in the cell membrane. Involved in the regulation of phagocytosis. The chain is Ras-related protein Rab-21 (rab21) from Dictyostelium discoideum (Social amoeba).